The primary structure comprises 66 residues: Cold shock-like protein CspLB (66 aa).

The region spanning G4–V63 is the CSD domain.

As to quaternary structure, homodimer.

It localises to the cytoplasm. The sequence is that of Cold shock-like protein CspLB (cspLB) from Listeria monocytogenes serovar 1/2a (strain ATCC BAA-679 / EGD-e).